Consider the following 141-residue polypeptide: Nucleoside diphosphate kinase (141 aa).

6 residues coordinate ATP: K11, F59, R87, T93, R104, and N114. The Pros-phosphohistidine intermediate role is filled by H117.

The protein belongs to the NDK family. As to quaternary structure, homotetramer. Mg(2+) serves as cofactor.

It localises to the cytoplasm. It carries out the reaction a 2'-deoxyribonucleoside 5'-diphosphate + ATP = a 2'-deoxyribonucleoside 5'-triphosphate + ADP. The enzyme catalyses a ribonucleoside 5'-diphosphate + ATP = a ribonucleoside 5'-triphosphate + ADP. Functionally, major role in the synthesis of nucleoside triphosphates other than ATP. The ATP gamma phosphate is transferred to the NDP beta phosphate via a ping-pong mechanism, using a phosphorylated active-site intermediate. The protein is Nucleoside diphosphate kinase of Nitrosospira multiformis (strain ATCC 25196 / NCIMB 11849 / C 71).